A 510-amino-acid polypeptide reads, in one-letter code: GMP synthase [glutamine-hydrolyzing] (510 aa).

Residues Thr-5–Asp-195 form the Glutamine amidotransferase type-1 domain. Catalysis depends on Cys-82, which acts as the Nucleophile. Active-site residues include His-169 and Glu-171. One can recognise a GMPS ATP-PPase domain in the interval Trp-196 to Arg-385. Ser-223–Ser-229 provides a ligand contact to ATP.

Homodimer.

The enzyme catalyses XMP + L-glutamine + ATP + H2O = GMP + L-glutamate + AMP + diphosphate + 2 H(+). The protein operates within purine metabolism; GMP biosynthesis; GMP from XMP (L-Gln route): step 1/1. Its function is as follows. Catalyzes the synthesis of GMP from XMP. The polypeptide is GMP synthase [glutamine-hydrolyzing] (Syntrophomonas wolfei subsp. wolfei (strain DSM 2245B / Goettingen)).